A 235-amino-acid chain; its full sequence is Auracyanin-B (235 aa).

A compositionally biased stretch (low complexity) spans 1-21; sequence MSWRGSGRSNFRSRSSSNGGS. Disordered regions lie at residues 1 to 27 and 64 to 107; these read MSWR…SGGS and ATPR…NVVN. A signal peptide spans 1 to 56; sequence MSWRGSGRSNFRSRSSSNGGSTFSGGSAGGPPLIVMMGLAFGAGLIMLIVMIASNA. The propeptide occupies 57–80; that stretch reads TAGGFVAATPRPTATPRPTAAPAP. Positions 69–86 are enriched in pro residues; that stretch reads TATPRPTAAPAPTQPPAA. A compositionally biased stretch (low complexity) spans 87–100; it reads QPTTAPATQAANAP. Positions 111 to 235 constitute a Plastocyanin-like domain; it reads AQTVEVRAAP…GMKGTLTVTP (125 aa). Residues His-152, Cys-217, His-222, and Met-227 each coordinate Cu cation.

The protein belongs to the multicopper oxidase family. Requires Cu cation as cofactor. Glycosylated.

It localises to the cell membrane. Its function is as follows. Probably a soluble electron acceptor for the integral membrane protein electron transfer alternative complex III (ACIII). This Chloroflexus aurantiacus (strain ATCC 29366 / DSM 635 / J-10-fl) protein is Auracyanin-B.